A 198-amino-acid chain; its full sequence is Dual specificity protein phosphatase 14 (198 aa).

The region spanning G26–G167 is the Tyrosine-protein phosphatase domain. C111 acts as the Phosphocysteine intermediate in catalysis.

The protein belongs to the protein-tyrosine phosphatase family. Non-receptor class dual specificity subfamily.

The enzyme catalyses O-phospho-L-tyrosyl-[protein] + H2O = L-tyrosyl-[protein] + phosphate. It catalyses the reaction O-phospho-L-seryl-[protein] + H2O = L-seryl-[protein] + phosphate. It carries out the reaction O-phospho-L-threonyl-[protein] + H2O = L-threonyl-[protein] + phosphate. In terms of biological role, involved in the inactivation of MAP kinases. Dephosphorylates ERK, JNK and p38 MAP-kinases. Plays a negative role in TCR signaling by dephosphorylating MAP3K7 adapter TAB1 leading to its inactivation. This Mus musculus (Mouse) protein is Dual specificity protein phosphatase 14 (Dusp14).